The following is a 175-amino-acid chain: Adenine phosphoribosyltransferase (175 aa).

The protein belongs to the purine/pyrimidine phosphoribosyltransferase family. Homodimer.

The protein localises to the cytoplasm. It catalyses the reaction AMP + diphosphate = 5-phospho-alpha-D-ribose 1-diphosphate + adenine. The protein operates within purine metabolism; AMP biosynthesis via salvage pathway; AMP from adenine: step 1/1. Functionally, catalyzes a salvage reaction resulting in the formation of AMP, that is energically less costly than de novo synthesis. The protein is Adenine phosphoribosyltransferase of Lactobacillus gasseri (strain ATCC 33323 / DSM 20243 / BCRC 14619 / CIP 102991 / JCM 1131 / KCTC 3163 / NCIMB 11718 / NCTC 13722 / AM63).